We begin with the raw amino-acid sequence, 490 residues long: Transcription factor MYB101 (490 aa).

Positions 1–21 (MDGGGETTATATMEGRGLKKG) are disordered. 2 consecutive HTH myb-type domains span residues 15-67 (GRGL…ANHL) and 68-122 (RPNL…KRRQ). 2 DNA-binding regions (H-T-H motif) span residues 43-67 (WNAVQKNSGLLRCGKSCRLRWANHL) and 95-118 (WARMASQLPGRTDNEIKNYWNTRM). Positions 168–206 (YTNSSNTSSSSSSFSSSSSQPSKRLRPDPLVSTNPGLNP) are disordered. The span at 169-186 (TNSSNTSSSSSSFSSSSS) shows a compositional bias: low complexity.

In terms of tissue distribution, present mostly in flowers, siliques and floral shoot tips. Expression is restricted to the subapical pith cells of both vegetative and flowering plants and to the hypocotyl hook. Expressed in pollen grains and pollen tube. Mostly expressed in mature pollen grains, and, to a lower extent, in inflorescences and siliques.

The protein resides in the nucleus. Its function is as follows. Transcription activator. Binds to 5'-CAACTGTC-3' and/or 5'-TAACAAA-3' motif in target gene promoter (e.g. alpha-amylase) to promote their expression. Positive regulator of abscisic acid (ABA) responses leading to growth arrest during seed germination. Promotes the expression of aleurone-related genes (e.g. CP1, CP, GASA1, BXL1 and BXL2) in seeds. Together with MYB33 and MYB65, promotes the programmed cell death (PCD) leading to vacuolation of protein storage vacuoles (PSVs) in the aleurone layers during seed germination. Maybe involved in the regulation of leaves lamina morphogenesis. Involved in pollen grain development. Together with MYB97 and MYB120, functions as a male factor that controls pollen tube-synergid interaction in fertilization. Required for pollen tube growth arrest and sperm cell release in the female gametophyte, probably via the regulation of pollen tube-specific gene expression. The protein is Transcription factor MYB101 of Arabidopsis thaliana (Mouse-ear cress).